Here is a 460-residue protein sequence, read N- to C-terminus: MAAGWVLSECGLRPLPRIYSRPRIGFTSKTTNLLKLRELPDSKSYNLCSSFKVSSWSNSKQSNWALNVAVPVNVSTVSGEDDREREEFNGIVNVDEGKGEFFDAGAPPPFTLADIRAAIPKHCWVKNPWRSMSYVLRDVVVVFGLAAVAAYFNNWVAWPLYWFCQGTMFWALFVLGHDCGHGSFSNNPKLNSVVGHLLHSSILVPYHGWRISHRTHHQNHGHVENDESWHPLSEKIFKSLDNVTKTLRFSLPFPMLAYPFYLWSRSPGKKGSHFHPDSGLFVPKERKDIITSTACWTAMAALLVYLNFSMGPVQMLKLYGIPYWIFVMWLDFVTYLHHHGHEDKLPWYRGKAWSYLRGGLTTLDRDYGWINNIHHDIGTHVIHHLFPQIPHYHLVEATEAAKPVMGKYYREPKKSGPLPLHLLGSLVRSMKEDHYVSDTGDVVYYQKDPKLSGIGGEKTE.

The Histidine box-1 motif lies at 177–181; the sequence is HDCGH. The short motif at 213–217 is the Histidine box-2 element; sequence HRTHH. The Histidine box-3 motif lies at 380 to 384; sequence HVIHH.

It belongs to the fatty acid desaturase type 1 family.

The protein resides in the plastid. It is found in the chloroplast membrane. It participates in lipid metabolism; polyunsaturated fatty acid biosynthesis. Its function is as follows. Chloroplast omega-3 fatty acid desaturase introduces the third double bond in the biosynthesis of 16:3 and 18:3 fatty acids, important constituents of plant membranes. It is thought to use ferredoxin as an electron donor and to act on fatty acids esterified to galactolipids, sulfolipids and phosphatidylglycerol. The chain is Omega-3 fatty acid desaturase, chloroplastic (FAD7A-1) from Ricinus communis (Castor bean).